Consider the following 62-residue polypeptide: Potassium channel toxin alpha-KTx Tx790 (62 aa).

The N-terminal stretch at 1 to 18 is a signal peptide; it reads MQKLFIVLVLFCILRLDA. Disulfide bonds link Cys-28–Cys-46, Cys-33–Cys-59, and Cys-37–Cys-61.

Belongs to the short scorpion toxin superfamily. Potassium channel inhibitor family. Alpha-KTx 23 subfamily. In terms of tissue distribution, expressed by the venom gland.

The protein resides in the secreted. May block potassium channels. In Buthus israelis (Israeli scorpion), this protein is Potassium channel toxin alpha-KTx Tx790.